A 310-amino-acid chain; its full sequence is Signal peptidase I (310 aa).

A helical transmembrane segment spans residues 5-25 (LSSFLLASSLITGTLWIINKI). Topologically, residues 26-57 (LSHNLLDSKIPFNIKKSKIYYKSKQVVQTFAS) are cytoplasmic. A helical membrane pass occupies residues 58–78 (FFPILIIVFIIRTFICEPFQI). At 79 to 310 (PSESMMPTLL…IQFDRIGNIY (232 aa)) the chain is on the extracellular side. Active-site residues include Ser82 and Lys137.

This sequence belongs to the peptidase S26 family.

The protein resides in the cell membrane. The enzyme catalyses Cleavage of hydrophobic, N-terminal signal or leader sequences from secreted and periplasmic proteins.. The chain is Signal peptidase I (lepB) from Buchnera aphidicola subsp. Baizongia pistaciae (strain Bp).